We begin with the raw amino-acid sequence, 311 residues long: uncharacterized protein (311 aa).

The chain crosses the membrane as a helical span at residues 168-188 (FNVMKGAILGLPIIGGIIVGV).

It localises to the cell membrane. This is an uncharacterized protein from Edwardsiella tarda.